A 404-amino-acid polypeptide reads, in one-letter code: Probable tRNA sulfurtransferase (404 aa).

Residues 60–165 form the THUMP domain; sequence QPIVEALKLV…DEAAYISYEE (106 aa). ATP-binding positions include 183–184, 208–209, R265, G287, and Q296; these read ML and HF.

This sequence belongs to the ThiI family.

It is found in the cytoplasm. The catalysed reaction is [ThiI sulfur-carrier protein]-S-sulfanyl-L-cysteine + a uridine in tRNA + 2 reduced [2Fe-2S]-[ferredoxin] + ATP + H(+) = [ThiI sulfur-carrier protein]-L-cysteine + a 4-thiouridine in tRNA + 2 oxidized [2Fe-2S]-[ferredoxin] + AMP + diphosphate. The enzyme catalyses [ThiS sulfur-carrier protein]-C-terminal Gly-Gly-AMP + S-sulfanyl-L-cysteinyl-[cysteine desulfurase] + AH2 = [ThiS sulfur-carrier protein]-C-terminal-Gly-aminoethanethioate + L-cysteinyl-[cysteine desulfurase] + A + AMP + 2 H(+). Its pathway is cofactor biosynthesis; thiamine diphosphate biosynthesis. In terms of biological role, catalyzes the ATP-dependent transfer of a sulfur to tRNA to produce 4-thiouridine in position 8 of tRNAs, which functions as a near-UV photosensor. Also catalyzes the transfer of sulfur to the sulfur carrier protein ThiS, forming ThiS-thiocarboxylate. This is a step in the synthesis of thiazole, in the thiamine biosynthesis pathway. The sulfur is donated as persulfide by IscS. This chain is Probable tRNA sulfurtransferase, found in Streptococcus pyogenes serotype M3 (strain ATCC BAA-595 / MGAS315).